The primary structure comprises 188 residues: Inosine triphosphate pyrophosphatase (188 aa).

12–17 (TGNKNK) serves as a coordination point for ITP. Glutamate 40 provides a ligand contact to Mg(2+). ITP contacts are provided by residues lysine 52, 68–69 (DT), lysine 85, 144–147 (FGWD), lysine 165, and 170–171 (HR).

It belongs to the HAM1 NTPase family. Homodimer. The cofactor is Mg(2+). Requires Mn(2+) as cofactor.

Its subcellular location is the cytoplasm. It is found in the nucleus. It catalyses the reaction ITP + H2O = IMP + diphosphate + H(+). The enzyme catalyses dITP + H2O = dIMP + diphosphate + H(+). It carries out the reaction XTP + H2O = XMP + diphosphate + H(+). Functionally, pyrophosphatase that hydrolyzes non-canonical purine nucleotides such as inosine triphosphate (ITP), deoxyinosine triphosphate (dITP) or xanthosine 5'-triphosphate (XTP) to their respective monophosphate derivatives. The enzyme does not distinguish between the deoxy- and ribose forms. Probably excludes non-canonical purines from RNA and DNA precursor pools, thus preventing their incorporation into RNA and DNA and avoiding chromosomal lesions. The protein is Inosine triphosphate pyrophosphatase of Phaeosphaeria nodorum (strain SN15 / ATCC MYA-4574 / FGSC 10173) (Glume blotch fungus).